The primary structure comprises 1031 residues: Error-prone DNA polymerase (1031 aa).

The protein belongs to the DNA polymerase type-C family. DnaE2 subfamily.

Its subcellular location is the cytoplasm. It catalyses the reaction DNA(n) + a 2'-deoxyribonucleoside 5'-triphosphate = DNA(n+1) + diphosphate. Functionally, DNA polymerase involved in damage-induced mutagenesis and translesion synthesis (TLS). It is not the major replicative DNA polymerase. In Pseudomonas savastanoi pv. phaseolicola (strain 1448A / Race 6) (Pseudomonas syringae pv. phaseolicola (strain 1448A / Race 6)), this protein is Error-prone DNA polymerase.